We begin with the raw amino-acid sequence, 301 residues long: Transcriptional activator FeaR (301 aa).

The HTH araC/xylS-type domain maps to 199-299 (QKVVTLIDDN…GMTPGEYRRK (101 aa)). 2 DNA-binding regions (H-T-H motif) span residues 217–238 (EWIA…ADKG) and 266–289 (LAGI…KQRF).

In terms of biological role, positive regulator of tynA/maoA and feaB/padA, the genes for 2-phenylethylamine catabolism. The protein is Transcriptional activator FeaR (feaR) of Escherichia coli (strain K12).